A 205-amino-acid polypeptide reads, in one-letter code: Syndecan 4-B (205 aa).

The N-terminal stretch at 1–17 (MNRLLLLLALVLSGVAA) is a signal peptide. Residues 18–162 (ESIRETETMD…FFQRTEVIVA (145 aa)) lie on the Extracellular side of the membrane. Positions 26 to 113 (MDPTSMLEYE…HDFDETKTGR (88 aa)) are disordered. 3 O-linked (Xyl...) (glycosaminoglycan) serine glycosylation sites follow: Ser37, Ser73, and Ser75. Acidic residues predominate over residues 44 to 94 (VFVDEDDDDDYEDGVDYEIDSESDNDEDYSGSGDDDFDDEDNVEDEDEEET). Positions 102–113 (PEHDFDETKTGR) are enriched in basic and acidic residues. The chain crosses the membrane as a helical span at residues 163–183 (IIAGTLVGLVVAVSFIVFLVI). The Cytoplasmic segment spans residues 184–205 (RRNQNGDLVKKPIYKKTSTMEV).

This sequence belongs to the syndecan proteoglycan family. As to quaternary structure, interacts with the Wnt receptor fzd7 and its signal transducer dvl2/dsh. In terms of processing, O-glycosylated; contains both chondroitin sulfate and heparan sulfate. Ser-37, Ser-73 and Ser-75 can all be modified by either chondroitin sulfate or heparan sulfate, and the protein exists in forms that contain only chondroitin sulfate, only heparan sulfate and both chondroitin sulfate and heparan sulfate. Expressed in the animal hemisphere from the 4-cell to the blastula stage. During gastrulation, expressed in the involuting dorsal mesoderm and ectoderm. After involution, localized mainly to the anterior neuroectoderm. At later stages, expressed in the brain, branchial arches, pronephros, tailbud, and at low levels in the somites.

The protein resides in the membrane. Functionally, cell surface proteoglycan. Regulates non-canonical Wnt signaling, being necessary and sufficient for fibronectrin-mediated translocation of dvl2/dsh to the plasma membrane. Required for proper convergent extension movements during gastrulation, which shape the neural plate, and for subsequent neural tube closure. This is Syndecan 4-B (sdc4-b) from Xenopus laevis (African clawed frog).